Reading from the N-terminus, the 220-residue chain is Large ribosomal subunit protein uL3 (220 aa).

A disordered region spans residues Ala-130–Met-156.

The protein belongs to the universal ribosomal protein uL3 family. As to quaternary structure, part of the 50S ribosomal subunit. Forms a cluster with proteins L14 and L19.

Its function is as follows. One of the primary rRNA binding proteins, it binds directly near the 3'-end of the 23S rRNA, where it nucleates assembly of the 50S subunit. In Staphylococcus aureus (strain Mu3 / ATCC 700698), this protein is Large ribosomal subunit protein uL3.